The sequence spans 466 residues: CCA-adding enzyme (466 aa).

Residues serine 55 and arginine 58 each contribute to the ATP site. Residues serine 55 and arginine 58 each coordinate CTP. Residues aspartate 67, aspartate 69, and aspartate 118 each coordinate Mg(2+). Residues histidine 141, lysine 161, and tyrosine 170 each coordinate ATP. Positions 141, 161, and 170 each coordinate CTP.

It belongs to the tRNA nucleotidyltransferase/poly(A) polymerase family. Archaeal CCA-adding enzyme subfamily. Homodimer. Requires Mg(2+) as cofactor.

It carries out the reaction a tRNA precursor + 2 CTP + ATP = a tRNA with a 3' CCA end + 3 diphosphate. The enzyme catalyses a tRNA with a 3' CCA end + 2 CTP + ATP = a tRNA with a 3' CCACCA end + 3 diphosphate. Its function is as follows. Catalyzes the addition and repair of the essential 3'-terminal CCA sequence in tRNAs without using a nucleic acid template. Adds these three nucleotides in the order of C, C, and A to the tRNA nucleotide-73, using CTP and ATP as substrates and producing inorganic pyrophosphate. tRNA 3'-terminal CCA addition is required both for tRNA processing and repair. Also involved in tRNA surveillance by mediating tandem CCA addition to generate a CCACCA at the 3' terminus of unstable tRNAs. While stable tRNAs receive only 3'-terminal CCA, unstable tRNAs are marked with CCACCA and rapidly degraded. The polypeptide is CCA-adding enzyme (Haloarcula marismortui (strain ATCC 43049 / DSM 3752 / JCM 8966 / VKM B-1809) (Halobacterium marismortui)).